Here is a 472-residue protein sequence, read N- to C-terminus: Chitobiosyldiphosphodolichol beta-mannosyltransferase (472 aa).

At 1 to 20 (MEEFQFIKYKGFDHVFKYSG) the chain is on the lumenal side. A helical transmembrane segment spans residues 21–41 (PWLWWLVGFYLCLPILAYTLL). Residues 42 to 118 (PYLTMNGTIS…PITVTKNTSN (77 aa)) lie on the Cytoplasmic side of the membrane. Positions 119–139 (LPFILFAAKKMVVQFFQLLKL) form an intramembrane region, helical. The Cytoplasmic portion of the chain corresponds to 140–472 (LSDFRGTDYV…MGKRFEYSTD (333 aa)).

The protein belongs to the glycosyltransferase group 1 family.

It is found in the endoplasmic reticulum membrane. The enzyme catalyses an N,N'-diacetylchitobiosyl-diphospho-di-trans,poly-cis-dolichol + GDP-alpha-D-mannose = a beta-D-Man-(1-&gt;4)-beta-D-GlcNAc-(1-&gt;4)-alpha-D-GlcNAc-diphospho-di-trans,poly-cis-dolichol + GDP + H(+). The protein operates within protein modification; protein glycosylation. Participates in the formation of the lipid-linked precursor oligosaccharide for N-glycosylation. Involved in assembling the dolichol-pyrophosphate-GlcNAc(2)-Man(5) intermediate on the cytoplasmic surface of the ER. The chain is Chitobiosyldiphosphodolichol beta-mannosyltransferase (ALG1) from Debaryomyces hansenii (strain ATCC 36239 / CBS 767 / BCRC 21394 / JCM 1990 / NBRC 0083 / IGC 2968) (Yeast).